The sequence spans 707 residues: DNA topoisomerase 1 (707 aa).

A Toprim domain is found at 1–140; it reads MYAILAEKPS…IKRLWTSSMT (140 aa). Residues 157 to 596 form the Topo IA-type catalytic domain; the sequence is TLPLYYQAKA…HSKKLSSVLF (440 aa). The tract at residues 199–204 is interaction with DNA; it reads SLGRVQ. Tyr-323 acts as the O-(5'-phospho-DNA)-tyrosine intermediate in catalysis.

The protein belongs to the type IA topoisomerase family. In terms of assembly, monomer.

The enzyme catalyses ATP-independent breakage of single-stranded DNA, followed by passage and rejoining.. Its function is as follows. Releases the supercoiling and torsional tension of DNA, which is introduced during the DNA replication and transcription, by transiently cleaving and rejoining one strand of the DNA duplex. Introduces a single-strand break via transesterification at a target site in duplex DNA. The scissile phosphodiester is attacked by the catalytic tyrosine of the enzyme, resulting in the formation of a DNA-(5'-phosphotyrosyl)-enzyme intermediate and the expulsion of a 3'-OH DNA strand. The free DNA strand then undergoes passage around the unbroken strand, thus removing DNA supercoils. Finally, in the religation step, the DNA 3'-OH attacks the covalent intermediate to expel the active-site tyrosine and restore the DNA phosphodiester backbone. This Alkalihalophilus pseudofirmus (strain ATCC BAA-2126 / JCM 17055 / OF4) (Bacillus pseudofirmus) protein is DNA topoisomerase 1 (topA).